The following is a 435-amino-acid chain: Cytidine monophosphate-N-acetylneuraminic acid hydroxylase (435 aa).

The protein belongs to the CMP-Neu5Ac hydroxylase family. The cofactor is [2Fe-2S] cluster.

The protein resides in the cytoplasm. The catalysed reaction is CMP-N-acetyl-beta-neuraminate + 2 Fe(II)-[cytochrome b5] + O2 + 2 H(+) = CMP-N-glycoloyl-beta-neuraminate + 2 Fe(III)-[cytochrome b5] + H2O. Its pathway is amino-sugar metabolism; N-acetylneuraminate metabolism. Its function is as follows. Sialic acids are components of carbohydrate chains of glycoconjugates and are involved in cell-cell recognition and cell-pathogen interactions. Catalyzes the conversion of CMP-N-acetylneuraminic acid (CMP-Neu5Ac) into its hydroxylated derivative CMP-N-glycolylneuraminic acid (CMP-Neu5Gc), a sialic acid abundantly expressed at the surface of many cells. The polypeptide is Cytidine monophosphate-N-acetylneuraminic acid hydroxylase (Sus scrofa (Pig)).